We begin with the raw amino-acid sequence, 597 residues long: Elongation factor 4 (597 aa).

One can recognise a tr-type G domain in the interval 2–184 (KNIRNFSIIA…RLVRDIPAPE (183 aa)). Residues 14 to 19 (DHGKST) and 131 to 134 (NKID) each bind GTP.

The protein belongs to the TRAFAC class translation factor GTPase superfamily. Classic translation factor GTPase family. LepA subfamily.

The protein resides in the cell inner membrane. It catalyses the reaction GTP + H2O = GDP + phosphate + H(+). Required for accurate and efficient protein synthesis under certain stress conditions. May act as a fidelity factor of the translation reaction, by catalyzing a one-codon backward translocation of tRNAs on improperly translocated ribosomes. Back-translocation proceeds from a post-translocation (POST) complex to a pre-translocation (PRE) complex, thus giving elongation factor G a second chance to translocate the tRNAs correctly. Binds to ribosomes in a GTP-dependent manner. The chain is Elongation factor 4 from Edwardsiella ictaluri (strain 93-146).